The following is a 368-amino-acid chain: Quinolinate synthase (368 aa).

Iminosuccinate is bound by residues His-46 and Ser-63. Cys-110 serves as a coordination point for [4Fe-4S] cluster. Iminosuccinate contacts are provided by residues 141–143 (YVN) and Ser-162. Residue Cys-230 participates in [4Fe-4S] cluster binding. Iminosuccinate contacts are provided by residues 256-258 (HPE) and Thr-273. Cys-320 contributes to the [4Fe-4S] cluster binding site.

The protein belongs to the quinolinate synthase family. Type 3 subfamily. [4Fe-4S] cluster is required as a cofactor.

It is found in the cytoplasm. It carries out the reaction iminosuccinate + dihydroxyacetone phosphate = quinolinate + phosphate + 2 H2O + H(+). Its pathway is cofactor biosynthesis; NAD(+) biosynthesis; quinolinate from iminoaspartate: step 1/1. In terms of biological role, catalyzes the condensation of iminoaspartate with dihydroxyacetone phosphate to form quinolinate. The sequence is that of Quinolinate synthase from Bacillus cereus (strain ZK / E33L).